A 453-amino-acid polypeptide reads, in one-letter code: uncharacterized protein (453 aa).

Disordered stretches follow at residues 15–42 and 425–453; these read LKRKQPSTSFNGKRKRTSSGLIEKSETM and TNEISSSNNSGTAKNKNNQNRKRNRRHAK. A compositionally biased stretch (polar residues) spans 425 to 437; that stretch reads TNEISSSNNSGTA. Positions 443-453 are enriched in basic residues; that stretch reads QNRKRNRRHAK.

This is an uncharacterized protein from Caenorhabditis elegans.